The chain runs to 289 residues: 4-hydroxy-tetrahydrodipicolinate synthase (289 aa).

T43 contacts pyruvate. Catalysis depends on Y131, which acts as the Proton donor/acceptor. The Schiff-base intermediate with substrate role is filled by K160. Pyruvate is bound at residue V200.

The protein belongs to the DapA family. As to quaternary structure, homotetramer; dimer of dimers.

The protein resides in the cytoplasm. The catalysed reaction is L-aspartate 4-semialdehyde + pyruvate = (2S,4S)-4-hydroxy-2,3,4,5-tetrahydrodipicolinate + H2O + H(+). It functions in the pathway amino-acid biosynthesis; L-lysine biosynthesis via DAP pathway; (S)-tetrahydrodipicolinate from L-aspartate: step 3/4. In terms of biological role, catalyzes the condensation of (S)-aspartate-beta-semialdehyde [(S)-ASA] and pyruvate to 4-hydroxy-tetrahydrodipicolinate (HTPA). The polypeptide is 4-hydroxy-tetrahydrodipicolinate synthase (Methanococcus maripaludis (strain DSM 14266 / JCM 13030 / NBRC 101832 / S2 / LL)).